The following is a 157-amino-acid chain: Short-type peptidyl-prolyl cis-trans isomerase (157 aa).

Positions 1–95 (MINLIKKGDY…RDERLIQEIP (95 aa)) constitute a PPIase FKBP-type domain. The tract at residues 86–137 (RDERLIQEIPKEMFADADFEPQEGMLILASGIPAKIIKVTDDTVTLDFNHEL) is IF.

The protein belongs to the FKBP-type PPIase family.

It localises to the cytoplasm. The enzyme catalyses [protein]-peptidylproline (omega=180) = [protein]-peptidylproline (omega=0). In terms of biological role, catalyzes the cis-trans isomerization of peptidyl prolyl bonds and accelerates protein folding. Also exhibits chaperone-like activity. The protein is Short-type peptidyl-prolyl cis-trans isomerase of Methanocaldococcus jannaschii (strain ATCC 43067 / DSM 2661 / JAL-1 / JCM 10045 / NBRC 100440) (Methanococcus jannaschii).